The primary structure comprises 309 residues: Ubiquitin domain-containing protein UBFD1 (309 aa).

The disordered stretch occupies residues 1–80; it reads MAAAGAPDGM…VSNGEDAGGG (80 aa). Residues 9-19 are compositionally biased toward acidic residues; sequence GMEEPGMDTEA. Low complexity predominate over residues 35-57; it reads EAEAAAGAAAEDSGAARGSLQPA. In terms of domain architecture, Ubiquitin-like spans 84–159; it reads ELVDLKIIWN…IMVVGSTIND (76 aa). The disordered stretch occupies residues 171–204; that stretch reads QQDAKAEENKKEPLCRQKQHRKVLDKGKPEDVMP. Composition is skewed to basic and acidic residues over residues 174-185 and 192-201; these read AKAEENKKEPLC and KVLDKGKPED.

As to quaternary structure, binds polyubiquitin.

Functionally, may play a role as NF-kappa-B regulator. The polypeptide is Ubiquitin domain-containing protein UBFD1 (UBFD1) (Homo sapiens (Human)).